The following is an 85-amino-acid chain: High-potential iron-sulfur protein (85 aa).

[4Fe-4S] cluster contacts are provided by Cys-43, Cys-46, Cys-63, and Cys-77.

Belongs to the high-potential iron-sulfur protein (HiPIP) family. Homodimer.

The protein resides in the periplasm. Specific class of high-redox-potential 4Fe-4S ferredoxins. Functions in anaerobic electron transport in most purple and in some other photosynthetic bacteria and in at least one genus (Paracoccus) of halophilic, denitrifying bacteria. In Allochromatium warmingii (Chromatium warmingii), this protein is High-potential iron-sulfur protein.